A 408-amino-acid chain; its full sequence is DNA primase DnaG (408 aa).

The 77-residue stretch at 172–248 folds into the Toprim domain; sequence DSIIIVEGRA…HVDYIARAPP (77 aa). Positions 178, 222, and 224 each coordinate Mg(2+). A disordered region spans residues 279–304; the sequence is AAGEKAETPQQPPPQQPVPQQEVREE.

The protein belongs to the archaeal DnaG primase family. As to quaternary structure, forms a ternary complex with MCM helicase and DNA. Component of the archaeal exosome complex. Mg(2+) is required as a cofactor.

It catalyses the reaction ssDNA + n NTP = ssDNA/pppN(pN)n-1 hybrid + (n-1) diphosphate.. Functionally, RNA polymerase that catalyzes the synthesis of short RNA molecules used as primers for DNA polymerase during DNA replication. Also part of the exosome, which is a complex involved in RNA degradation. Acts as a poly(A)-binding protein that enhances the interaction between heteromeric, adenine-rich transcripts and the exosome. This Pyrobaculum aerophilum (strain ATCC 51768 / DSM 7523 / JCM 9630 / CIP 104966 / NBRC 100827 / IM2) protein is DNA primase DnaG.